The chain runs to 474 residues: Adenosylhomocysteinase (474 aa).

Substrate-binding residues include threonine 53, aspartate 135, and glutamate 197. Threonine 198–threonine 200 is an NAD(+) binding site. Positions 227 and 231 each coordinate substrate. NAD(+) is bound by residues asparagine 232, glycine 261–glycine 266, glutamate 284, asparagine 319, isoleucine 340–histidine 342, and asparagine 388.

Belongs to the adenosylhomocysteinase family. It depends on NAD(+) as a cofactor.

The protein resides in the cytoplasm. It carries out the reaction S-adenosyl-L-homocysteine + H2O = L-homocysteine + adenosine. It functions in the pathway amino-acid biosynthesis; L-homocysteine biosynthesis; L-homocysteine from S-adenosyl-L-homocysteine: step 1/1. May play a key role in the regulation of the intracellular concentration of adenosylhomocysteine. The protein is Adenosylhomocysteinase of Corynebacterium glutamicum (strain ATCC 13032 / DSM 20300 / JCM 1318 / BCRC 11384 / CCUG 27702 / LMG 3730 / NBRC 12168 / NCIMB 10025 / NRRL B-2784 / 534).